The sequence spans 296 residues: MAVLAPLIALVYSVPRLSRWLAQPYYLLSALLSAAFLLVRKLPPLCHGLPTQREDGNPCDFDWREVEILMFLSAIVMMKNRRSITVEQHIGNIFMFSKVANAILFFRLDIRMGLLYITLCIVFLMTCKPPLYMGPEYIKYFNDKTIDEELERDKRVTWIVEFFANWANDCQSFAPIYADLSLKYNCTGLNFGKVDVGRYTDVSTRYKVSTSPLTKQLPTLILFQGGKEVMRRPQIDKKGRAVSWTFSEENVIREFNLNELYQRAKKLSKAGDNIPEEQPVAPTPTRVSDGESKKDK.

A signal peptide spans 1 to 48 (MAVLAPLIALVYSVPRLSRWLAQPYYLLSALLSAAFLLVRKLPPLCHG). The Extracellular portion of the chain corresponds to 49–102 (LPTQREDGNPCDFDWREVEILMFLSAIVMMKNRRSITVEQHIGNIFMFSKVANA). The chain crosses the membrane as a helical span at residues 103-125 (ILFFRLDIRMGLLYITLCIVFLM). Positions 114 to 269 (LLYITLCIVF…LYQRAKKLSK (156 aa)) constitute a Thioredoxin domain. Residues 126–296 (TCKPPLYMGP…VSDGESKKDK (171 aa)) are Cytoplasmic-facing. A phosphoserine mark is found at S211, S243, and S288. The interval 269–296 (KAGDNIPEEQPVAPTPTRVSDGESKKDK) is disordered. Positions 293–296 (KKDK) match the Di-lysine motif motif.

In terms of assembly, monomer. Homodimer; disulfide-linked. Occurs in both reduced and oxidized monomeric form. Oxidative conditions increase homodimerization. Interacts with CANX. Interacts with ATP2A2.

The protein localises to the endoplasmic reticulum membrane. It is found in the mitochondrion membrane. In terms of biological role, endoplasmic reticulum and mitochondria-associated protein that probably functions as a regulator of cellular redox state and thereby regulates protein post-translational modification, protein folding and mitochondrial activity. Indirectly regulates neuronal proliferation, migration, and organization in the developing brain. The chain is Thioredoxin-related transmembrane protein 2 (TMX2) from Macaca fascicularis (Crab-eating macaque).